Consider the following 692-residue polypeptide: PTS system glucoside-specific EIICBA component (692 aa).

Residues 6–430 form the PTS EIIC type-1 domain; it reads KKFFGQLQRI…LNLKTPGRED (425 aa). Transmembrane regions (helical) follow at residues 15–35, 84–104, 140–160, 185–205, 215–235, 287–307, 318–338, 344–364, 370–390, and 398–418; these read IGKALMLPVAILPAAGILLTF, LGLAGGDGVAGIAALVGYLIM, LVLGIPTLQTGVFGGIIIGAL, FVPIITSLVAIVTGIVLSFVW, LSNFLLGKNLALTTFIFGIIE, AFTTGKYPFMMFGLPAAAFAI, VVGGLMLSAALTSFLTGITEP, LFVAPILYVAHVILAGTSFLI, VQIGMTFSGGFIDYILYGLLS, and LVIPVGIAYALIYYFLFTFLI. In terms of domain architecture, PTS EIIB type-1 spans 441 to 522; the sequence is SELPFEVLEA…QQIMDGKITS (82 aa). C463 serves as the catalytic Phosphocysteine intermediate; for EIIB activity. The PTS EIIA type-1 domain maps to 563–667; that stretch reads DKVFSAKMMG…DTITPIIITN (105 aa). H615 serves as the catalytic Tele-phosphohistidine intermediate; for EIIA activity.

The protein localises to the cell membrane. With respect to regulation, inhibited by methyl alpha-D-glucoside, methyl beta-D-glucoside, p-nitrophenyl alpha-D-glucoside, o-nitrophenyl beta-D-glucoside and salicin, but not by 2-deoxyglucose. The phosphoenolpyruvate-dependent sugar phosphotransferase system (sugar PTS), a major carbohydrate active -transport system, catalyzes the phosphorylation of incoming sugar substrates concomitantly with their translocation across the cell membrane. This system is involved in alpha- and beta-glucoside transport. Can also transport glucose, but not galactose, fructose, mannose, cellobiose, sucrose, maltose, lactose, melibiose and trehalose, as well as N-acetylglucosamine. The polypeptide is PTS system glucoside-specific EIICBA component (glcB) (Staphylococcus carnosus (strain TM300)).